We begin with the raw amino-acid sequence, 184 residues long: Probable RNA 2'-phosphotransferase (184 aa).

It belongs to the KptA/TPT1 family.

Removes the 2'-phosphate from RNA via an intermediate in which the phosphate is ADP-ribosylated by NAD followed by a presumed transesterification to release the RNA and generate ADP-ribose 1''-2''-cyclic phosphate (APPR&gt;P). May function as an ADP-ribosylase. In Rhodopirellula baltica (strain DSM 10527 / NCIMB 13988 / SH1), this protein is Probable RNA 2'-phosphotransferase.